A 76-amino-acid polypeptide reads, in one-letter code: MSKGVLVGVVTDARRDKTVKVSVYRMVHHKVYKKIVKKCRVYSVHDEQNRCARGDVVKIREHVPISATKRWIVVDE.

This sequence belongs to the universal ribosomal protein uS17 family. As to quaternary structure, part of the 30S ribosomal subunit.

Functionally, one of the primary rRNA binding proteins, it binds specifically to the 5'-end of 16S ribosomal RNA. In Anaplasma phagocytophilum (strain HZ), this protein is Small ribosomal subunit protein uS17.